A 63-amino-acid polypeptide reads, in one-letter code: Cypmaclein (63 aa).

It belongs to the GASA family. In terms of tissue distribution, expressed in pollen (at protein level).

The polypeptide is Cypmaclein (Juniperus ashei (Ozark white cedar)).